The primary structure comprises 661 residues: MQSFRKIWNKPRPDDWMPLARFYYADSALNDIASELDSFDGRRDPDRCNALVTRLRVAQDRVLHIITEMLIHLYPREQDRACRDFRVKFPDEILHDTLPGQLWFGAECLSAGSNIIDHETESDLIRPLAKDVTKQLDFLRDLLKNQSLRDPSAYNPVIKENLLKFDKLFAEFEYQYVSAMVPVKSVKEHDSQLDVAVLFSEVLSLALVKDLITQDLIDYCDPSVMIAIPRLGIVWGLLVYSNGALNVDVPAENLSEMFRPFYSLLVKIRNLLRILTPTELTKLETVLCKGESAVPEDTSSTLTMSDFRTNATDEEKAKNNQRVWMCDMPSDSTSSLDSSVQDSSSETTSLASSALASPHSGSEENVSQIENEEGDDEAIGTNSNSSNEVTESPETIEEPDNVDMEESSESEVDTHIDETRNESDDEITDDVQASDVLQVETKKCKSSRLLEQKKFDKSVKTIIPMQTDPRSQIDPKNLRSRFRSSEDLVHRLFVCIAGVADQLQTNYSSEIRKVLKLILQPSEIIPVYEVVNAQVANSQTEGEETGVEAQETLPLPAFMGVRWVPDEDCEQCTACSMPFNFVRRRHHCRNCGRIFCHKCSCNTISIPEHGYDRKVRVCNLCYVHRLNSFGCNEPMSQVNENGATVPSVTEQQSAQTASASS.

A disordered region spans residues Val294–Gln432. A compositionally biased stretch (polar residues) spans Asp297–Asn310. 2 stretches are compositionally biased toward low complexity: residues Ser330 to Ser360 and Thr381 to Pro393. Positions Glu394–Glu411 are enriched in acidic residues. Residues Val412 to Glu422 are compositionally biased toward basic and acidic residues. An FYVE-type zinc finger spans residues Asp566 to Leu626. Zn(2+)-binding residues include Cys572, Cys575, Cys588, Cys591, Cys596, Cys599, Cys618, and Cys621. A compositionally biased stretch (polar residues) spans Asn641–Glu650. Residues Asn641–Ser661 form a disordered region. Over residues Gln651–Ser661 the composition is skewed to low complexity.

It belongs to the lst-2 family. Expressed in vulval precursor cells (VPCs).

Functionally, negative regulator of epidermal growth factor receptor (EGFR) signaling. The polypeptide is Lateral signaling target protein 2 (lst-2) (Caenorhabditis elegans).